The chain runs to 1123 residues: Nicotinic receptor-associated protein 4 (1123 aa).

Positions M1–A18 are cleaved as a signal peptide. At N19 to D1071 the chain is on the lumenal side. The helical transmembrane segment at I1072–N1092 threads the bilayer. Residues Q1093–K1123 lie on the Cytoplasmic side of the membrane.

As to quaternary structure, may interact with nra-2 in the ER. Expressed in body wall, pharyngeal, uterine and vulval muscles, motor neurons, nerve ring, motor and ventral cord neurons, hypodermal cells in the tail, vulval epithelium and intestine.

Its subcellular location is the endoplasmic reticulum membrane. In terms of biological role, involved in the recognition and selection of protein complexes to exit the endoplasmic reticulum (ER). In muscles, regulates levamisole-sensitive nicotinic acetylcholine receptor (L-AChR) subunit composition, possibly by allowing only specific L-AChR subunit combinations to exit the ER. Specifically, may promote the inclusion of alpha subunit unc-38 into and the exclusion of unc-29 from L-AChR. Regulates L-AChR sensitivity to agonists such as nicotine and levamisole at neuro-muscular junctions. The chain is Nicotinic receptor-associated protein 4 from Caenorhabditis elegans.